The primary structure comprises 434 residues: Methylenetetrahydrofolate--tRNA-(uracil-5-)-methyltransferase TrmFO (434 aa).

10–15 (GAGLAG) is a binding site for FAD.

Belongs to the MnmG family. TrmFO subfamily. Requires FAD as cofactor.

The protein resides in the cytoplasm. It carries out the reaction uridine(54) in tRNA + (6R)-5,10-methylene-5,6,7,8-tetrahydrofolate + NADH + H(+) = 5-methyluridine(54) in tRNA + (6S)-5,6,7,8-tetrahydrofolate + NAD(+). The catalysed reaction is uridine(54) in tRNA + (6R)-5,10-methylene-5,6,7,8-tetrahydrofolate + NADPH + H(+) = 5-methyluridine(54) in tRNA + (6S)-5,6,7,8-tetrahydrofolate + NADP(+). Its function is as follows. Catalyzes the folate-dependent formation of 5-methyl-uridine at position 54 (M-5-U54) in all tRNAs. This chain is Methylenetetrahydrofolate--tRNA-(uracil-5-)-methyltransferase TrmFO, found in Bacillus cereus (strain G9842).